The primary structure comprises 318 residues: Aspartate carbamoyltransferase catalytic subunit (318 aa).

Carbamoyl phosphate contacts are provided by arginine 59 and threonine 60. Lysine 87 serves as a coordination point for L-aspartate. Carbamoyl phosphate-binding residues include arginine 109, histidine 137, and glutamine 140. L-aspartate is bound by residues arginine 170 and arginine 224. Residues glycine 265 and proline 266 each coordinate carbamoyl phosphate.

This sequence belongs to the aspartate/ornithine carbamoyltransferase superfamily. ATCase family. As to quaternary structure, heterododecamer (2C3:3R2) of six catalytic PyrB chains organized as two trimers (C3), and six regulatory PyrI chains organized as three dimers (R2).

The catalysed reaction is carbamoyl phosphate + L-aspartate = N-carbamoyl-L-aspartate + phosphate + H(+). Its pathway is pyrimidine metabolism; UMP biosynthesis via de novo pathway; (S)-dihydroorotate from bicarbonate: step 2/3. In terms of biological role, catalyzes the condensation of carbamoyl phosphate and aspartate to form carbamoyl aspartate and inorganic phosphate, the committed step in the de novo pyrimidine nucleotide biosynthesis pathway. The polypeptide is Aspartate carbamoyltransferase catalytic subunit (Rhizobium etli (strain ATCC 51251 / DSM 11541 / JCM 21823 / NBRC 15573 / CFN 42)).